The sequence spans 353 residues: Guanine nucleotide-binding protein alpha-1 subunit (353 aa).

Gly-2 carries the N-myristoyl glycine lipid modification. The S-palmitoyl cysteine moiety is linked to residue Cys-3. The G-alpha domain maps to 32–353 (NEIKMLLLGA…QVNLRDCGLL (322 aa)). Positions 35-48 (KMLLLGAGESGKST) are G1 motif. GTP contacts are provided by Glu-43, Ser-44, Gly-45, Lys-46, Ser-47, Thr-48, Asp-150, Leu-175, Thr-181, Gly-203, Asn-269, Lys-270, Asp-272, and Ala-325. Ser-47 is a Mg(2+) binding site. A G2 motif region spans residues 173–181 (DVLRSRVKT). Thr-181 lines the Mg(2+) pocket. The interval 196 to 205 (YKLFDVGGQR) is G3 motif. A G4 motif region spans residues 265 to 272 (ILFLNKID). The tract at residues 323 to 328 (TCATDT) is G5 motif.

Belongs to the G-alpha family. G proteins are composed of 3 units; alpha, beta and gamma. The alpha chain contains the guanine nucleotide binding site. Requires Mg(2+) as cofactor.

Guanine nucleotide-binding proteins (G proteins) are involved as modulators or transducers in various transmembrane signaling systems. The polypeptide is Guanine nucleotide-binding protein alpha-1 subunit (GPA1) (Mycosarcoma maydis (Corn smut fungus)).